Here is a 1293-residue protein sequence, read N- to C-terminus: DNA-directed RNA polymerase subunit beta' (1293 aa).

Residues cysteine 60, cysteine 62, cysteine 75, and cysteine 78 each coordinate Zn(2+). Residues aspartate 535, aspartate 537, and aspartate 539 each coordinate Mg(2+). Positions 873, 950, 957, and 960 each coordinate Zn(2+).

Belongs to the RNA polymerase beta' chain family. The RNAP catalytic core consists of 2 alpha, 1 beta, 1 beta' and 1 omega subunit. When a sigma factor is associated with the core the holoenzyme is formed, which can initiate transcription. Mg(2+) serves as cofactor. It depends on Zn(2+) as a cofactor.

It catalyses the reaction RNA(n) + a ribonucleoside 5'-triphosphate = RNA(n+1) + diphosphate. Functionally, DNA-dependent RNA polymerase catalyzes the transcription of DNA into RNA using the four ribonucleoside triphosphates as substrates. In Cutibacterium acnes (strain DSM 16379 / KPA171202) (Propionibacterium acnes), this protein is DNA-directed RNA polymerase subunit beta'.